Here is a 103-residue protein sequence, read N- to C-terminus: N(4)-acetylcytidine amidohydrolase (103 aa).

The 89-residue stretch at 6-94 folds into the ASCH domain; sequence ITFFQRFQND…IAEIYPNQTQ (89 aa). Lys21 acts as the Proton acceptor in catalysis. The Nucleophile role is filled by Thr24. Glu74 (proton donor) is an active-site residue.

It belongs to the N(4)-acetylcytidine amidohydrolase family.

The enzyme catalyses N(4)-acetylcytidine + H2O = cytidine + acetate + H(+). The catalysed reaction is N(4)-acetyl-2'-deoxycytidine + H2O = 2'-deoxycytidine + acetate + H(+). It catalyses the reaction N(4)-acetylcytosine + H2O = cytosine + acetate + H(+). In terms of biological role, catalyzes the hydrolysis of N(4)-acetylcytidine (ac4C). This Salmonella typhi protein is N(4)-acetylcytidine amidohydrolase (yqfB).